The chain runs to 85 residues: UPF0297 protein CD630_12830 (85 aa).

Belongs to the UPF0297 family.

In Clostridioides difficile (strain 630) (Peptoclostridium difficile), this protein is UPF0297 protein CD630_12830.